The chain runs to 376 residues: Dihydroorotate dehydrogenase (quinone) (376 aa).

FMN-binding positions include 74 to 78 (AGFDK) and threonine 98. Lysine 78 serves as a coordination point for substrate. 123–127 (NHMGF) is a binding site for substrate. Asparagine 152 and asparagine 185 together coordinate FMN. Residue asparagine 185 participates in substrate binding. The active-site Nucleophile is serine 188. Asparagine 190 contacts substrate. FMN contacts are provided by lysine 223 and threonine 251. 252–253 (NT) is a substrate binding site. FMN is bound by residues glycine 280, glycine 309, and 330-331 (YT). The interval 352-376 (RNPAPSSPERMPTGIQSGRKIVMDP) is disordered.

It belongs to the dihydroorotate dehydrogenase family. Type 2 subfamily. In terms of assembly, monomer. FMN is required as a cofactor.

It is found in the cell membrane. It catalyses the reaction (S)-dihydroorotate + a quinone = orotate + a quinol. It participates in pyrimidine metabolism; UMP biosynthesis via de novo pathway; orotate from (S)-dihydroorotate (quinone route): step 1/1. In terms of biological role, catalyzes the conversion of dihydroorotate to orotate with quinone as electron acceptor. This is Dihydroorotate dehydrogenase (quinone) from Synechococcus sp. (strain JA-3-3Ab) (Cyanobacteria bacterium Yellowstone A-Prime).